We begin with the raw amino-acid sequence, 178 residues long: ATP synthase subunit delta (178 aa).

This sequence belongs to the ATPase delta chain family. As to quaternary structure, F-type ATPases have 2 components, F(1) - the catalytic core - and F(0) - the membrane proton channel. F(1) has five subunits: alpha(3), beta(3), gamma(1), delta(1), epsilon(1). F(0) has three main subunits: a(1), b(2) and c(10-14). The alpha and beta chains form an alternating ring which encloses part of the gamma chain. F(1) is attached to F(0) by a central stalk formed by the gamma and epsilon chains, while a peripheral stalk is formed by the delta and b chains.

The protein resides in the cell membrane. Functionally, f(1)F(0) ATP synthase produces ATP from ADP in the presence of a proton or sodium gradient. F-type ATPases consist of two structural domains, F(1) containing the extramembraneous catalytic core and F(0) containing the membrane proton channel, linked together by a central stalk and a peripheral stalk. During catalysis, ATP synthesis in the catalytic domain of F(1) is coupled via a rotary mechanism of the central stalk subunits to proton translocation. Its function is as follows. This protein is part of the stalk that links CF(0) to CF(1). It either transmits conformational changes from CF(0) to CF(1) or is implicated in proton conduction. This is ATP synthase subunit delta from Streptococcus pyogenes serotype M3 (strain ATCC BAA-595 / MGAS315).